Here is a 388-residue protein sequence, read N- to C-terminus: Chorismate synthase (388 aa).

The NADP(+) site is built by Arg-39 and Arg-45. The tract at residues 95-118 (EKNEKSRRVSRPRPGHADLVGGMK) is disordered. FMN contacts are provided by residues 130-132 (RSS), 251-252 (NA), Gly-296, 311-315 (KPIPT), and Arg-337.

This sequence belongs to the chorismate synthase family. Homotetramer. It depends on FMNH2 as a cofactor.

The catalysed reaction is 5-O-(1-carboxyvinyl)-3-phosphoshikimate = chorismate + phosphate. It functions in the pathway metabolic intermediate biosynthesis; chorismate biosynthesis; chorismate from D-erythrose 4-phosphate and phosphoenolpyruvate: step 7/7. Catalyzes the anti-1,4-elimination of the C-3 phosphate and the C-6 proR hydrogen from 5-enolpyruvylshikimate-3-phosphate (EPSP) to yield chorismate, which is the branch point compound that serves as the starting substrate for the three terminal pathways of aromatic amino acid biosynthesis. This reaction introduces a second double bond into the aromatic ring system. The sequence is that of Chorismate synthase from Listeria welshimeri serovar 6b (strain ATCC 35897 / DSM 20650 / CCUG 15529 / CIP 8149 / NCTC 11857 / SLCC 5334 / V8).